The chain runs to 124 residues: UPF0299 membrane protein VP1300 (124 aa).

4 helical membrane passes run 9 to 29 (LIQL…GITI), 35 to 55 (VSVP…TLGL), 72 to 92 (MILL…MLLA), and 95 to 115 (LPII…LAWL).

Belongs to the UPF0299 family.

It is found in the cell inner membrane. The polypeptide is UPF0299 membrane protein VP1300 (Vibrio parahaemolyticus serotype O3:K6 (strain RIMD 2210633)).